Consider the following 552-residue polypeptide: Arginine--tRNA ligase (552 aa).

The short motif at 130–140 (ANPTGPIHLGG) is the 'HIGH' region element.

It belongs to the class-I aminoacyl-tRNA synthetase family. In terms of assembly, monomer.

The protein localises to the cytoplasm. The enzyme catalyses tRNA(Arg) + L-arginine + ATP = L-arginyl-tRNA(Arg) + AMP + diphosphate. This chain is Arginine--tRNA ligase, found in Nocardia farcinica (strain IFM 10152).